A 184-amino-acid chain; its full sequence is C-phycoerythrin class 1 subunit beta (184 aa).

Cysteine 50 and cysteine 61 together coordinate (2R,3E)-phycoerythrobilin. The residue at position 72 (asparagine 72) is an N4-methylasparagine. Cysteine 82 and cysteine 165 together coordinate (2R,3E)-phycoerythrobilin.

Belongs to the phycobiliprotein family. In terms of assembly, heterodimer of an alpha and a beta chain. In terms of processing, contains three covalently linked bilin chromophores.

It localises to the cellular thylakoid membrane. Light-harvesting photosynthetic bile pigment-protein from the phycobiliprotein complex. This is C-phycoerythrin class 1 subunit beta (cpeB) from Synechococcus sp. (strain WH7803).